The following is a 402-amino-acid chain: Bacillibactin exporter (402 aa).

The next 11 helical transmembrane spans lie at 4-24 (IIALSSVPLVMTLGNSMLIPV), 39-59 (VSLIITVYSVVAIICIPIAGY), 69-89 (ILLPCLLIAGLGGAVAAFAST), 104-124 (LQGIGSAGAAPIVMPFIGDLF), 162-182 (FVPFWFIPFFCLISFLLVLFL), 212-232 (WLYTVFIIGCVIMFLLFGVLF), 247-267 (VAKGGLLAIPLLFLSTSSFIA), 278-298 (MKFCVVTGMILLTLSFIALWW), 302-322 (FYFLFVFLSFGGIGIGMALPA), 342-362 (FYNSMRFIGVALGPPVFAALM), and 368-388 (IIFILSAFCSIVSLFLVLFTV).

It belongs to the major facilitator superfamily.

It is found in the cell membrane. Its function is as follows. Involved in secretion of bacillibactin. The protein is Bacillibactin exporter (ymfD) of Bacillus subtilis (strain 168).